Reading from the N-terminus, the 134-residue chain is Small ribosomal subunit protein uS17c (134 aa).

Residues 1–37 (HHFFTGNGIGLNRFSNPISSPQTQTQTRSLPFPAIKA) constitute a chloroplast transit peptide. The interval 106–134 (FLAVPAPSRKSKKAGSSGELGIPLQSQQE) is disordered.

Belongs to the universal ribosomal protein uS17 family. Part of the 30S ribosomal subunit.

Its subcellular location is the plastid. The protein localises to the chloroplast. Functionally, one of the primary rRNA binding proteins, it binds specifically to the 5'-end of 16S ribosomal RNA. The chain is Small ribosomal subunit protein uS17c (RPS17) from Pisum sativum (Garden pea).